The primary structure comprises 93 residues: Neurophysin 1 (93 aa).

Intrachain disulfides connect Cys-10–Cys-54, Cys-13–Cys-27, Cys-21–Cys-44, Cys-28–Cys-34, Cys-61–Cys-74, Cys-68–Cys-86, and Cys-75–Cys-80.

It belongs to the vasopressin/oxytocin family.

Functionally, neurophysin 1 specifically binds oxytocin. The protein is Neurophysin 1 of Struthio camelus (Common ostrich).